Here is a 1608-residue protein sequence, read N- to C-terminus: Adenylate cyclase type 10 (1608 aa).

Guanylate cyclase domains follow at residues 42 to 179 (VLMF…RLAQ) and 293 to 418 (TIVF…ARMM). The Mg(2+) site is built by Asp47 and Ile48. 47–52 (DISGFT) serves as a coordination point for ATP. Lys95 is a binding site for hydrogencarbonate. Residue Asp99 coordinates Mg(2+). ATP is bound by residues Asp99 and Lys144. The hydrogencarbonate site is built by Val167, Arg176, and Met337. ATP is bound by residues Val406 and 412-416 (NIAAR).

This sequence belongs to the adenylyl cyclase class-4/guanylyl cyclase family. The cofactor is Mg(2+). It depends on Mn(2+) as a cofactor. In terms of processing, cleavage may occur to generate the active 48 kDa form. Detected in testis (at protein level). Preferentially expressed in testis.

It localises to the cell membrane. Its subcellular location is the cytoplasm. It is found in the cytoskeleton. The protein resides in the perinuclear region. The protein localises to the nucleus. It localises to the cell projection. Its subcellular location is the cilium. It is found in the mitochondrion. It carries out the reaction ATP = 3',5'-cyclic AMP + diphosphate. With respect to regulation, activated by manganese or magnesium ions. In the presence of magnesium ions, the enzyme is activated by bicarbonate. Calcium mildly increases the enzyme activity, also in the presence of magnesium ions. In terms of biological role, catalyzes the formation of the signaling molecule cAMP. May function as sensor that mediates responses to changes in cellular bicarbonate and CO(2) levels. Has a critical role in mammalian spermatogenesis by producing the cAMP which regulates cAMP-responsive nuclear factors indispensable for sperm maturation in the epididymis. Induces capacitation, the maturational process that sperm undergo prior to fertilization. Involved in ciliary beat regulation. The polypeptide is Adenylate cyclase type 10 (Adcy10) (Rattus norvegicus (Rat)).